The following is a 162-amino-acid chain: NADH-quinone oxidoreductase subunit I (162 aa).

4Fe-4S ferredoxin-type domains are found at residues 52-82 and 93-122; these read LRRY…IEAG and VRYD…EGPN. Residues Cys62, Cys65, Cys68, Cys72, Cys102, Cys105, Cys108, and Cys112 each contribute to the [4Fe-4S] cluster site.

Belongs to the complex I 23 kDa subunit family. NDH-1 is composed of 14 different subunits. Subunits NuoA, H, J, K, L, M, N constitute the membrane sector of the complex. It depends on [4Fe-4S] cluster as a cofactor.

Its subcellular location is the cell inner membrane. The enzyme catalyses a quinone + NADH + 5 H(+)(in) = a quinol + NAD(+) + 4 H(+)(out). Functionally, NDH-1 shuttles electrons from NADH, via FMN and iron-sulfur (Fe-S) centers, to quinones in the respiratory chain. The immediate electron acceptor for the enzyme in this species is believed to be ubiquinone. Couples the redox reaction to proton translocation (for every two electrons transferred, four hydrogen ions are translocated across the cytoplasmic membrane), and thus conserves the redox energy in a proton gradient. This chain is NADH-quinone oxidoreductase subunit I, found in Nitrobacter winogradskyi (strain ATCC 25391 / DSM 10237 / CIP 104748 / NCIMB 11846 / Nb-255).